Here is a 155-residue protein sequence, read N- to C-terminus: Protein U1 (155 aa).

The protein belongs to the nanovirus U1 protein family.

This is Protein U1 (DNA-U1) from Cicer arietinum (Chickpea).